Reading from the N-terminus, the 274-residue chain is NH(3)-dependent NAD(+) synthetase (274 aa).

An ATP-binding site is contributed by Gly46–Ser53. Mg(2+) is bound at residue Asp52. Arg140 lines the deamido-NAD(+) pocket. Position 160 (Thr160) interacts with ATP. Residue Glu165 participates in Mg(2+) binding. Residues Lys173 and Asp180 each coordinate deamido-NAD(+). The ATP site is built by Lys189 and Thr211. His260–Lys261 contributes to the deamido-NAD(+) binding site.

The protein belongs to the NAD synthetase family. As to quaternary structure, homodimer.

It catalyses the reaction deamido-NAD(+) + NH4(+) + ATP = AMP + diphosphate + NAD(+) + H(+). Its pathway is cofactor biosynthesis; NAD(+) biosynthesis; NAD(+) from deamido-NAD(+) (ammonia route): step 1/1. Catalyzes the ATP-dependent amidation of deamido-NAD to form NAD. Uses ammonia as a nitrogen source. The chain is NH(3)-dependent NAD(+) synthetase from Streptococcus pyogenes serotype M2 (strain MGAS10270).